A 236-amino-acid chain; its full sequence is 2-C-methyl-D-erythritol 4-phosphate cytidylyltransferase (236 aa).

The protein belongs to the IspD/TarI cytidylyltransferase family. IspD subfamily.

The catalysed reaction is 2-C-methyl-D-erythritol 4-phosphate + CTP + H(+) = 4-CDP-2-C-methyl-D-erythritol + diphosphate. It functions in the pathway isoprenoid biosynthesis; isopentenyl diphosphate biosynthesis via DXP pathway; isopentenyl diphosphate from 1-deoxy-D-xylulose 5-phosphate: step 2/6. Catalyzes the formation of 4-diphosphocytidyl-2-C-methyl-D-erythritol from CTP and 2-C-methyl-D-erythritol 4-phosphate (MEP). The chain is 2-C-methyl-D-erythritol 4-phosphate cytidylyltransferase from Azoarcus sp. (strain BH72).